The primary structure comprises 766 residues: Serine/threonine-protein kinase tousled-like 1 (766 aa).

The disordered stretch occupies residues 1–198; that stretch reads MSVQSSSGSL…PSPTALAFGD (198 aa). A compositionally biased stretch (low complexity) spans 20-33; it reads STSPTPGSAAAARS. Phosphothreonine is present on Thr-38. The span at 43–64 shows a compositional bias: basic and acidic residues; that stretch reads RPREGAMDELHSLDPRRQELLE. Residues Ser-54, Ser-77, and Ser-80 each carry the phosphoserine modification. The span at 68–85 shows a compositional bias: low complexity; sequence TGVATGSTGSTGSCSVGA. The segment covering 87-103 has biased composition (polar residues); it reads ASTNNESSNHSFGSLGS. Residues 105-121 are compositionally biased toward basic and acidic residues; that stretch reads SDKESETPEKKQSESSR. Phosphoserine occurs at positions 134, 159, 174, and 176. Residues 170-192 are compositionally biased toward low complexity; it reads SPQNSHSHSTPSSSVRPNSPSPT. A coiled-coil region spans residues 229 to 280; the sequence is NQDLEKKEGRIDDLLRANCDLRRQIDDQQKLLEKYKERLNKCISMSKKLLIE. The segment at 344-381 is disordered; that stretch reads KLLGKRKPPTANNSQAPATNSEAKQRKTKAVNGAENDP. Residues 353–365 are compositionally biased toward polar residues; the sequence is TANNSQAPATNSE. The stretch at 397–445 forms a coiled coil; it reads HEQEEIFKLRLGHLKKEEAEIQAELERLERVRNLHIRELKRINNEDNSQ. Residues 456–734 enclose the Protein kinase domain; sequence YLLLHLLGRG…VHQLANDPYL (279 aa). Residues 462–470 and Lys-485 contribute to the ATP site; that span reads LGRGGFSEV. The active-site Proton acceptor is Asp-586. The residue at position 743 (Ser-743) is a Phosphoserine. The tract at residues 745-766 is disordered; sequence GNLHMSGLTATPTPPSSSIITY.

This sequence belongs to the protein kinase superfamily. Ser/Thr protein kinase family. Heterodimer with TLK2. Requires Mg(2+) as cofactor. Ubiquitously expressed in all tissues examined.

The protein resides in the nucleus. It carries out the reaction L-seryl-[protein] + ATP = O-phospho-L-seryl-[protein] + ADP + H(+). It catalyses the reaction L-threonyl-[protein] + ATP = O-phospho-L-threonyl-[protein] + ADP + H(+). Cell-cycle regulated, maximal activity in S-phase. Inactivated by phosphorylation at Ser-743, potentially by CHEK1. In terms of biological role, rapidly and transiently inhibited by phosphorylation following the generation of DNA double-stranded breaks during S-phase. This is cell cycle checkpoint and ATM-pathway dependent and appears to regulate processes involved in chromatin assembly. Isoform 3 protects the cells from the ionizing radiation by facilitating the repair of DSBs. In vitro, phosphorylates histone H3 at 'Ser-10'. In Mus musculus (Mouse), this protein is Serine/threonine-protein kinase tousled-like 1 (Tlk1).